A 243-amino-acid chain; its full sequence is Probable transcriptional regulatory protein BG0025 (243 aa).

Belongs to the TACO1 family.

The protein resides in the cytoplasm. This Borrelia garinii subsp. bavariensis (strain ATCC BAA-2496 / DSM 23469 / PBi) (Borreliella bavariensis) protein is Probable transcriptional regulatory protein BG0025.